A 592-amino-acid chain; its full sequence is Methionine--tRNA ligase (592 aa).

The short motif at 12-22 (PYANGPFHVGH) is the 'HIGH' region element. Residues cysteine 144, cysteine 147, cysteine 157, and cysteine 160 each coordinate Zn(2+). Positions 342–346 (KMSTS) match the 'KMSKS' region motif. Position 345 (threonine 345) interacts with ATP.

This sequence belongs to the class-I aminoacyl-tRNA synthetase family. MetG type 1 subfamily. Monomer. The cofactor is Zn(2+).

The protein resides in the cytoplasm. It catalyses the reaction tRNA(Met) + L-methionine + ATP = L-methionyl-tRNA(Met) + AMP + diphosphate. Its function is as follows. Is required not only for elongation of protein synthesis but also for the initiation of all mRNA translation through initiator tRNA(fMet) aminoacylation. This is Methionine--tRNA ligase from Roseiflexus castenholzii (strain DSM 13941 / HLO8).